A 355-amino-acid chain; its full sequence is Protein RecA (355 aa).

Residue 67–74 (GPESSGKT) participates in ATP binding.

The protein belongs to the RecA family.

The protein localises to the cytoplasm. Its function is as follows. Can catalyze the hydrolysis of ATP in the presence of single-stranded DNA, the ATP-dependent uptake of single-stranded DNA by duplex DNA, and the ATP-dependent hybridization of homologous single-stranded DNAs. It interacts with LexA causing its activation and leading to its autocatalytic cleavage. The protein is Protein RecA of Shewanella amazonensis (strain ATCC BAA-1098 / SB2B).